Here is a 144-residue protein sequence, read N- to C-terminus: Glycine-rich protein HC1 (144 aa).

A helical membrane pass occupies residues 5 to 25 (IFLLLGLSIAFAILISSEVAA). Tandem repeats lie at residues 37 to 42 (GYNNGG), 43 to 48 (GYHNGG), 50 to 55 (GYNNGG), 56 to 61 (GYHNGG), 63 to 68 (GYNNGG), 69 to 74 (GYHNGG), 76 to 81 (GYNNGG), 82 to 87 (GYHNGG), 89 to 94 (GYNNGG), 102 to 107 (GYNNGG), and 108 to 113 (GYHGGG). The tract at residues 37-113 (GYNNGGGYHN…NNGGGYHGGG (77 aa)) is 11 X 6 AA tandem repeats of G-Y-[NH]-N-G -G.

The protein belongs to the GRP family.

The protein resides in the membrane. The sequence is that of Glycine-rich protein HC1 from Oxybasis rubra (Red goosefoot).